Here is a 459-residue protein sequence, read N- to C-terminus: Glutathione reductase (459 aa).

7 residues coordinate FAD: S14, G15, E34, T41, C42, K50, and A114. S14 contacts glutathione. The cysteines at positions 42 and 47 are disulfide-linked. Positions 177, 180, 197, 203, and 262 each coordinate NADP(+). The FAD site is built by D313 and T321. R329 lines the glutathione pocket. A351 contacts NADP(+). H448 is a binding site for FAD. H448 serves as the catalytic Proton acceptor.

This sequence belongs to the class-I pyridine nucleotide-disulfide oxidoreductase family. As to quaternary structure, homodimer. It depends on FAD as a cofactor.

Its subcellular location is the cytoplasm. The enzyme catalyses 2 glutathione + NADP(+) = glutathione disulfide + NADPH + H(+). Catalyzes the reduction of glutathione disulfide (GSSG) to reduced glutathione (GSH). Constitutes the major mechanism to maintain a high GSH:GSSG ratio in the cytosol. This chain is Glutathione reductase (gor), found in Nostoc sp. (strain PCC 7120 / SAG 25.82 / UTEX 2576).